Here is a 218-residue protein sequence, read N- to C-terminus: Glutathione S-transferase (218 aa).

The region spanning 2 to 88 (PVTLGYWDIR…YIARKHDLCG (87 aa)) is the GST N-terminal domain. Glutathione is bound by residues 7–8 (YW), 46–50 (WLNEK), 59–60 (NL), and 72–73 (QS). The 119-residue stretch at 90–208 (TEEERIQLDI…KSSRFSCKQI (119 aa)) folds into the GST C-terminal domain. A substrate-binding site is contributed by Tyr116.

This sequence belongs to the GST superfamily. Mu family. In terms of assembly, homodimer.

Its subcellular location is the cytoplasm. It carries out the reaction RX + glutathione = an S-substituted glutathione + a halide anion + H(+). In terms of biological role, conjugation of reduced glutathione to a wide number of exogenous and endogenous hydrophobic electrophiles. This is Glutathione S-transferase from Mesocricetus auratus (Golden hamster).